Here is a 457-residue protein sequence, read N- to C-terminus: UDP-N-acetylmuramate--L-alanyl-gamma-D-glutamyl-meso-2,6-diaminoheptandioate ligase (457 aa).

ATP is bound at residue 110–116 (GTHGKTT).

The protein belongs to the MurCDEF family. Mpl subfamily. It depends on Mg(2+) as a cofactor.

The protein resides in the secreted. It carries out the reaction UDP-N-acetyl-alpha-D-muramate + L-alanyl-gamma-D-glutamyl-meso-2,6-diaminopimelate + ATP = UDP-N-acetyl-alpha-D-muramoyl-L-alanyl-gamma-D-glutamyl-meso-2,6-diaminopimelate + ADP + phosphate + H(+). Its pathway is cell wall biogenesis; peptidoglycan recycling. Its function is as follows. Reutilizes the intact tripeptide L-alanyl-gamma-D-glutamyl-meso-diaminopimelate by linking it to UDP-N-acetylmuramate. The enzyme can also use the tetrapeptide L-alanyl-gamma-D-glutamyl-meso-2,6-diaminoheptanedioyl-D-alanine or the pentapeptide L-alanyl-gamma-D-glutamyl-meso-2,6-diaminoheptandioyl-D-alanyl-D-alanine in vivo and in vitro. The polypeptide is UDP-N-acetylmuramate--L-alanyl-gamma-D-glutamyl-meso-2,6-diaminoheptandioate ligase (Escherichia coli (strain K12)).